We begin with the raw amino-acid sequence, 225 residues long: Sugar fermentation stimulation protein homolog (225 aa).

It belongs to the SfsA family.

The chain is Sugar fermentation stimulation protein homolog from Sulfurisphaera tokodaii (strain DSM 16993 / JCM 10545 / NBRC 100140 / 7) (Sulfolobus tokodaii).